Consider the following 659-residue polypeptide: Methionine--tRNA ligase (659 aa).

The short motif at Tyr-13–His-23 is the 'HIGH' region element. A 'KMSKS' region motif is present at residues Lys-308 to Ser-312. An ATP-binding site is contributed by Lys-311. In terms of domain architecture, tRNA-binding spans Asp-559–Lys-659.

It belongs to the class-I aminoacyl-tRNA synthetase family. MetG type 2B subfamily. As to quaternary structure, homodimer.

It is found in the cytoplasm. The enzyme catalyses tRNA(Met) + L-methionine + ATP = L-methionyl-tRNA(Met) + AMP + diphosphate. Its function is as follows. Is required not only for elongation of protein synthesis but also for the initiation of all mRNA translation through initiator tRNA(fMet) aminoacylation. The chain is Methionine--tRNA ligase from Staphylococcus haemolyticus (strain JCSC1435).